The following is a 510-amino-acid chain: Chromosomal replication initiator protein DnaA (510 aa).

The interval Met1–Lys74 is domain I, interacts with DnaA modulators. Residues Lys74 to Gly173 are domain II. The tract at residues Ala125–Pro168 is disordered. The tract at residues Arg174–Ser390 is domain III, AAA+ region. Residues Gly218, Gly220, Lys221, and Thr222 each contribute to the ATP site. The domain IV, binds dsDNA stretch occupies residues Arg391 to Gly510.

It belongs to the DnaA family. As to quaternary structure, oligomerizes as a right-handed, spiral filament on DNA at oriC.

Its subcellular location is the cytoplasm. Functionally, plays an essential role in the initiation and regulation of chromosomal replication. ATP-DnaA binds to the origin of replication (oriC) to initiate formation of the DNA replication initiation complex once per cell cycle. Binds the DnaA box (a 9 base pair repeat at the origin) and separates the double-stranded (ds)DNA. Forms a right-handed helical filament on oriC DNA; dsDNA binds to the exterior of the filament while single-stranded (ss)DNA is stabiized in the filament's interior. The ATP-DnaA-oriC complex binds and stabilizes one strand of the AT-rich DNA unwinding element (DUE), permitting loading of DNA polymerase. After initiation quickly degrades to an ADP-DnaA complex that is not apt for DNA replication. Binds acidic phospholipids. This is Chromosomal replication initiator protein DnaA from Leptothrix cholodnii (strain ATCC 51168 / LMG 8142 / SP-6) (Leptothrix discophora (strain SP-6)).